The following is a 1261-amino-acid chain: AT-rich interactive domain-containing protein 4A (1261 aa).

The DNA-binding stretch occupies residues 4–121; sequence ADEPAYLTVG…RHFAESETLD (118 aa). Disordered stretches follow at residues 142–169, 273–310, and 435–470; these read RGRR…DKRR, ESSS…LDPE, and APEM…PRGR. Composition is skewed to acidic residues over residues 151–165 and 276–289; these read TEDE…EEDE and SSDD…EHEE. The span at 290 to 299 shows a compositional bias: basic and acidic residues; it reads EKEKEAKKEE. A compositionally biased stretch (acidic residues) spans 300 to 310; sequence EELPEEELDPE. Residues 309-401 enclose the ARID domain; that stretch reads PEERDNFLQQ…YLYGFEEYCR (93 aa). Lys-481 is covalently cross-linked (Glycyl lysine isopeptide (Lys-Gly) (interchain with G-Cter in SUMO2)). 3 disordered regions span residues 498 to 582, 633 to 768, and 842 to 953; these read LENK…GTKV, WPLD…EAGD, and FSST…EDAM. Residues 512–522 are compositionally biased toward basic and acidic residues; that stretch reads PAAKREHELLF. A compositionally biased stretch (basic residues) spans 526–536; sequence STPKNKEKKIK. A compositionally biased stretch (acidic residues) spans 541–551; that stretch reads SERDSDEEEEK. Residues 552–564 are compositionally biased toward basic and acidic residues; it reads SQEREETESRCDS. Residues 565–574 are compositionally biased toward acidic residues; sequence EGEDEEDDTE. In terms of domain architecture, Tudor-knot spans 579–631; that stretch reads GTKVKVKYGRGKTQKIYEASIKSTEMDDGEILYLVHYYGWNVRYDEWVKADRI. The segment covering 640-649 has biased composition (basic residues); it reads PKKKQKKKVK. A compositionally biased stretch (basic and acidic residues) spans 650–665; that stretch reads NKEDSEKDEKRDEERQ. Positions 676–689 are enriched in polar residues; sequence STFSPNMPYSLSKT. At Ser-679 the chain carries Phosphoserine. Over residues 690-702 the composition is skewed to low complexity; the sequence is SNSEGKSDSCSSD. Positions 708–753 are enriched in basic and acidic residues; it reads QLEKSSGGEDLSPDVKEELEKNENAHDDKLDEENPKIVHISKENDR. Ser-719 bears the Phosphoserine mark. Glycyl lysine isopeptide (Lys-Gly) (interchain with G-Cter in SUMO2) cross-links involve residues Lys-723 and Lys-743. Position 867 is a phosphoserine (Ser-867). Basic and acidic residues-rich tracts occupy residues 899-909 and 929-947; these read KGAHVEQHFET and TSEK…TPLK. The tract at residues 955-968 is retinoblastoma protein binding; it reads LIGPETLVCHEVDL. The span at 1067–1080 shows a compositional bias: basic and acidic residues; that stretch reads HERESREKGQKRPS. Disordered stretches follow at residues 1067–1173 and 1216–1261; these read HERE…RTYK and RRRK…VECR. Phosphoserine is present on residues Ser-1113 and Ser-1149. A compositionally biased stretch (low complexity) spans 1230–1252; the sequence is HAGASMSSASSDTGMSPSSSSPP.

As to quaternary structure, identified in mSin3A corepressor complexes together with SIN3A, SIN3B, RBBP4, RBBP7, SAP30, BRMS1, HDAC1 and HDAC2. Interacts with BRMS1. Interacts with RB1. Interacts with ARID4B. Interacts with AR. Expressed in Sertoli cells of the testis.

The protein resides in the nucleus. DNA-binding protein which modulates activity of several transcription factors including RB1 (retinoblastoma-associated protein) and AR (androgen receptor). May function as part of an mSin3A repressor complex. Has no intrinsic transcriptional activity. Plays a role in the regulation of epigenetic modifications at the PWS/AS imprinting center near the SNRPN promoter, where it might function as part of a complex with RB1 and ARID4B. Involved in spermatogenesis, together with ARID4B, where it acts as a transcriptional coactivator for AR and enhances expression of genes required for sperm maturation. Regulates expression of the tight junction protein CLDN3 in the testis, which is important for integrity of the blood-testis barrier. Plays a role in myeloid homeostasis where it regulates the histone methylation state of bone marrow cells and expression of various genes involved in hematopoiesis. May function as a leukemia suppressor. This is AT-rich interactive domain-containing protein 4A from Mus musculus (Mouse).